We begin with the raw amino-acid sequence, 152 residues long: D-aminoacyl-tRNA deacylase (152 aa).

The short motif at 142 to 143 (GP) is the Gly-cisPro motif, important for rejection of L-amino acids element.

The protein belongs to the DTD family. In terms of assembly, homodimer.

It localises to the cytoplasm. The enzyme catalyses glycyl-tRNA(Ala) + H2O = tRNA(Ala) + glycine + H(+). It carries out the reaction a D-aminoacyl-tRNA + H2O = a tRNA + a D-alpha-amino acid + H(+). Functionally, an aminoacyl-tRNA editing enzyme that deacylates mischarged D-aminoacyl-tRNAs. Also deacylates mischarged glycyl-tRNA(Ala), protecting cells against glycine mischarging by AlaRS. Acts via tRNA-based rather than protein-based catalysis; rejects L-amino acids rather than detecting D-amino acids in the active site. By recycling D-aminoacyl-tRNA to D-amino acids and free tRNA molecules, this enzyme counteracts the toxicity associated with the formation of D-aminoacyl-tRNA entities in vivo and helps enforce protein L-homochirality. The polypeptide is D-aminoacyl-tRNA deacylase (Burkholderia mallei (strain NCTC 10247)).